Consider the following 823-residue polypeptide: Putative ankyrin repeat domain-containing protein 20A2 (823 aa).

5 ANK repeats span residues 66 to 95, 99 to 128, 132 to 161, 165 to 194, and 198 to 227; these read QHRT…QIDV, ENRT…NPNL, YGNT…HIEA, DNNT…SSHA, and LRRS…DVFA. Disordered stretches follow at residues 301-343 and 355-402; these read VPEK…EVED and VQTL…LSEN. Residues 372 to 384 are compositionally biased toward basic and acidic residues; it reads QERHERSEKKQPQ. Coiled-coil stretches lie at residues 431 to 480, 565 to 724, and 776 to 805; these read KKLK…KQLE, EMIT…NNST, and LVLE…EKTE.

The sequence is that of Putative ankyrin repeat domain-containing protein 20A2 from Homo sapiens (Human).